Reading from the N-terminus, the 44-residue chain is Mu-conotoxin-like Cal 12.1.2f (44 aa).

4 disulfide bridges follow: Cys-3–Cys-15, Cys-10–Cys-27, Cys-17–Cys-32, and Cys-26–Cys-38. Trp-16 bears the 6'-bromotryptophan mark. Pro-22 bears the 4-hydroxyproline mark. 6'-bromotryptophan occurs at positions 36 and 37. Pro-39 is modified (4-hydroxyproline). A 6'-bromotryptophan modification is found at Trp-43.

In terms of tissue distribution, expressed by the venom duct.

It is found in the secreted. In terms of biological role, mu-conotoxins block voltage-gated sodium channels. This toxin reversibly blocks voltage-gated sodium channel in cephalopods, with no alteration in the voltage dependence of sodium conductance or on the kinetics of inactivation. This chain is Mu-conotoxin-like Cal 12.1.2f, found in Californiconus californicus (California cone).